A 302-amino-acid polypeptide reads, in one-letter code: 4-hydroxy-tetrahydrodipicolinate synthase (302 aa).

Pyruvate is bound at residue threonine 49. Residue tyrosine 137 is the Proton donor/acceptor of the active site. The active-site Schiff-base intermediate with substrate is lysine 166. Residue isoleucine 208 coordinates pyruvate.

It belongs to the DapA family. Homotetramer; dimer of dimers.

Its subcellular location is the cytoplasm. The catalysed reaction is L-aspartate 4-semialdehyde + pyruvate = (2S,4S)-4-hydroxy-2,3,4,5-tetrahydrodipicolinate + H2O + H(+). Its pathway is amino-acid biosynthesis; L-lysine biosynthesis via DAP pathway; (S)-tetrahydrodipicolinate from L-aspartate: step 3/4. Catalyzes the condensation of (S)-aspartate-beta-semialdehyde [(S)-ASA] and pyruvate to 4-hydroxy-tetrahydrodipicolinate (HTPA). The polypeptide is 4-hydroxy-tetrahydrodipicolinate synthase (Chloroherpeton thalassium (strain ATCC 35110 / GB-78)).